The sequence spans 565 residues: uncharacterized protein (565 aa).

Transmembrane regions (helical) follow at residues 28 to 48 (IFHF…LPFA), 73 to 93 (ASYG…DTGL), 109 to 129 (VLAI…FLVW), 169 to 189 (LFLF…FYFI), 262 to 282 (IVIQ…YPVL), 315 to 335 (LIVT…VITS), 364 to 384 (SLIF…FGVI), 393 to 413 (VFPW…AMFI), 461 to 481 (AFLV…LLPL), and 526 to 546 (TLGL…LTFV).

It belongs to the TrkH potassium transport family.

It is found in the cell membrane. This is an uncharacterized protein from Mycoplasma pneumoniae (strain ATCC 29342 / M129 / Subtype 1) (Mycoplasmoides pneumoniae).